Consider the following 358-residue polypeptide: tRNA-specific 2-thiouridylase MnmA (358 aa).

Residues 6–13 (ALSGGVDS) and M32 contribute to the ATP site. Catalysis depends on C103, which acts as the Nucleophile. A disulfide bond links C103 and C201. ATP is bound at residue G127. The segment at 151 to 153 (KDQ) is interaction with tRNA. C201 functions as the Cysteine persulfide intermediate in the catalytic mechanism.

Belongs to the MnmA/TRMU family.

The protein localises to the cytoplasm. The catalysed reaction is S-sulfanyl-L-cysteinyl-[protein] + uridine(34) in tRNA + AH2 + ATP = 2-thiouridine(34) in tRNA + L-cysteinyl-[protein] + A + AMP + diphosphate + H(+). In terms of biological role, catalyzes the 2-thiolation of uridine at the wobble position (U34) of tRNA, leading to the formation of s(2)U34. This is tRNA-specific 2-thiouridylase MnmA from Thermotoga petrophila (strain ATCC BAA-488 / DSM 13995 / JCM 10881 / RKU-1).